Consider the following 458-residue polypeptide: ATP synthase subunit beta (458 aa).

An ATP-binding site is contributed by 148-155 (GGAGVGKT).

This sequence belongs to the ATPase alpha/beta chains family. F-type ATPases have 2 components, CF(1) - the catalytic core - and CF(0) - the membrane proton channel. CF(1) has five subunits: alpha(3), beta(3), gamma(1), delta(1), epsilon(1). CF(0) has three main subunits: a(1), b(2) and c(9-12). The alpha and beta chains form an alternating ring which encloses part of the gamma chain. CF(1) is attached to CF(0) by a central stalk formed by the gamma and epsilon chains, while a peripheral stalk is formed by the delta and b chains.

Its subcellular location is the cell inner membrane. It catalyses the reaction ATP + H2O + 4 H(+)(in) = ADP + phosphate + 5 H(+)(out). Its function is as follows. Produces ATP from ADP in the presence of a proton gradient across the membrane. The catalytic sites are hosted primarily by the beta subunits. The sequence is that of ATP synthase subunit beta from Pseudomonas aeruginosa (strain LESB58).